Consider the following 527-residue polypeptide: Laccase-5 (527 aa).

The signal sequence occupies residues 1 to 23; the sequence is MGKFHSFVNVVALSLSLSGRVFG. In terms of domain architecture, Plastocyanin-like 1 spans 25 to 150; sequence IGPVTDLTIS…DGLRGPLVVY (126 aa). N74 and N77 each carry an N-linked (GlcNAc...) asparagine glycan. 4 residues coordinate Cu cation: H87, H89, H132, and H134. Cystine bridges form between C108–C516 and C140–C230. N156, N209, N233, N242, N276, N317, N358, N366, N393, and N402 each carry an N-linked (GlcNAc...) asparagine glycan. In terms of domain architecture, Plastocyanin-like 2 spans 162–306; the sequence is VDDDTTVITL…GGVNSAILRY (145 aa). A Plastocyanin-like 3 domain is found at 373–498; that stretch reads TVPVLLQILS…AGFAIVFAED (126 aa). Cu cation contacts are provided by H425, H428, H430, H480, C481, H482, and H486.

This sequence belongs to the multicopper oxidase family. The cofactor is Cu cation.

It localises to the secreted. The catalysed reaction is 4 hydroquinone + O2 = 4 benzosemiquinone + 2 H2O. Functionally, lignin degradation and detoxification of lignin-derived products. The polypeptide is Laccase-5 (LCC5) (Trametes versicolor (White-rot fungus)).